We begin with the raw amino-acid sequence, 490 residues long: Serine palmitoyltransferase 2 (490 aa).

A helical transmembrane segment spans residues 10–30 (VDDVGYLPILFLYIAYAFIIF). An N6-(pyridoxal phosphate)lysine modification is found at K321.

It belongs to the class-II pyridoxal-phosphate-dependent aminotransferase family. As to quaternary structure, forms a heterodimer with sptA. It depends on pyridoxal 5'-phosphate as a cofactor.

It localises to the endoplasmic reticulum membrane. It catalyses the reaction L-serine + hexadecanoyl-CoA + H(+) = 3-oxosphinganine + CO2 + CoA. It functions in the pathway lipid metabolism; sphingolipid metabolism. Catalytic subunit of serine palmitoyltransferase (SPT), which catalyzes the committed step in the synthesis of sphingolipids, the condensation of serine with palmitoyl CoA to form the long chain base 3-ketosphinganine. The sequence is that of Serine palmitoyltransferase 2 (sptB) from Dictyostelium discoideum (Social amoeba).